The chain runs to 74 residues: Omega-conotoxin-like PuIIA (74 aa).

Residues 1-22 (MKLTCVVIVAVLFLTACQLITA) form the signal peptide. A propeptide spanning residues 23–46 (ETYSRGEQKHRALSSTDKNSKLTR) is cleaved from the precursor. 3 cysteine pairs are disulfide-bonded: cysteine 48–cysteine 62, cysteine 55–cysteine 66, and cysteine 61–cysteine 73.

This sequence belongs to the conotoxin O1 superfamily. As to expression, expressed by the venom duct.

Its subcellular location is the secreted. Omega-conotoxins act at presynaptic membranes, they bind and block voltage-gated calcium channels (Cav). The sequence is that of Omega-conotoxin-like PuIIA from Conus pulicarius (Flea-bitten cone).